The primary structure comprises 265 residues: Synaptoporin (265 aa).

Residues 1-4 (MCMV) are Cytoplasmic-facing. Residues 1 to 202 (MCMVIFAPLF…NIWFVFKETG (202 aa)) form the MARVEL domain. A helical membrane pass occupies residues 5–25 (IFAPLFAIFAFATCGGYSGGL). Topologically, residues 26-81 (RLSVDCVNKTESNLSIDIAFAYPFRLHQVTFEVPTCEGKERQKLALVGDSSSSAEF) are vesicular. 2 N-linked (GlcNAc...) asparagine glycosylation sites follow: N33 and N38. A helical membrane pass occupies residues 82 to 102 (FVTVAVFAFLYSLAATVVYIF). Over 103–114 (FQNKYRENNRGP) the chain is Cytoplasmic. A helical membrane pass occupies residues 115–135 (LIDFIVTVVFSFLWLVGSSAW). The Vesicular segment spans residues 136-177 (AKGLSDVKVATDPKEVLLLMSACKQPSNKCMAVHSPVMSSLN). A glycan (N-linked (GlcNAc...) asparagine) is linked at N177. A helical transmembrane segment spans residues 178–198 (TSVVFGFLNFILWAGNIWFVF). Topologically, residues 199 to 265 (KETGWHSSGQ…SGPTSFNNQI (67 aa)) are cytoplasmic. Residues 210-214 (YLSDP) form repeat 1. A 5 X approximate repeats region spans residues 210–242 (YLSDPMEKHSSSYNQGGYNQDSYGSSGGYSQQA). S212 and S220 each carry phosphoserine. The tract at residues 221–265 (SYNQGGYNQDSYGSSGGYSQQASLGPTSDEFGQQPSGPTSFNNQI) is disordered. A run of 4 repeats spans residues 222-226 (YNQGG), 227-231 (YNQDS), 232-236 (YGSSG), and 238-242 (YSQQA). Residues 224 to 243 (QGGYNQDSYGSSGGYSQQAS) are compositionally biased toward low complexity. Positions 244–265 (LGPTSDEFGQQPSGPTSFNNQI) are enriched in polar residues.

The protein belongs to the synaptophysin/synaptobrevin family. As to expression, central nervous system.

Its subcellular location is the cytoplasmic vesicle. The protein localises to the secretory vesicle. It is found in the synaptic vesicle membrane. It localises to the synapse. The protein resides in the synaptosome. Intrinsic membrane protein of small synaptic vesicles. Probable vesicular channel protein. The sequence is that of Synaptoporin (Synpr) from Rattus norvegicus (Rat).